The primary structure comprises 560 residues: Trafficking protein particle complex II-specific subunit 65 (560 aa).

Residues 164–193 (SSKNTNNHLEKNNRATHRVSSKNSEVHEAD) form a disordered region. Residues serine 393 and serine 398 each carry the phosphoserine modification.

As to quaternary structure, part of the multisubunit TRAPP (transport protein particle) II complex composed of BET3, BET5, TRS20, TRS23, TRS31, TRS33, TRS65, TRS120 and TRS130. Interacts directly with TRS120 and TRS130.

The protein localises to the cytoplasm. The protein resides in the golgi apparatus. It is found in the cis-Golgi network. It participates in glycan metabolism; beta-glucan biosynthesis. In terms of biological role, specific subunit of the TRAPP II complex, a highly conserved vesicle tethering complex that functions in the late Golgi as a guanine nucleotide exchanger (GEF) for the Golgi YPT1 GTPase. TRS65 plays a role in the YPT GEF activity of TRAPP II in concert with the two other TRAPP II-specific subunits TRS120 and TRS130. Involved in cell wall (1--&gt;6)-beta-glucan synthesis. The chain is Trafficking protein particle complex II-specific subunit 65 (TRS65) from Saccharomyces cerevisiae (strain ATCC 204508 / S288c) (Baker's yeast).